Reading from the N-terminus, the 302-residue chain is Sulfate adenylyltransferase subunit 2 (302 aa).

A disordered region spans residues 280–302; it reads RQGRVIDHDSSGSMEKKKREGYF.

It belongs to the PAPS reductase family. CysD subfamily. In terms of assembly, heterodimer composed of CysD, the smaller subunit, and CysN.

The catalysed reaction is sulfate + ATP + H(+) = adenosine 5'-phosphosulfate + diphosphate. The protein operates within sulfur metabolism; hydrogen sulfide biosynthesis; sulfite from sulfate: step 1/3. Its function is as follows. With CysN forms the ATP sulfurylase (ATPS) that catalyzes the adenylation of sulfate producing adenosine 5'-phosphosulfate (APS) and diphosphate, the first enzymatic step in sulfur assimilation pathway. APS synthesis involves the formation of a high-energy phosphoric-sulfuric acid anhydride bond driven by GTP hydrolysis by CysN coupled to ATP hydrolysis by CysD. This is Sulfate adenylyltransferase subunit 2 from Shewanella amazonensis (strain ATCC BAA-1098 / SB2B).